We begin with the raw amino-acid sequence, 179 residues long: UPF0227 protein Shewmr7_1806 (179 aa).

It belongs to the UPF0227 family.

This chain is UPF0227 protein Shewmr7_1806, found in Shewanella sp. (strain MR-7).